Here is a 341-residue protein sequence, read N- to C-terminus: Eukaryotic translation initiation factor 2 subunit 1 (341 aa).

The 72-residue stretch at 18–89 (NELVMVRIES…DKGYIDLSKR (72 aa)) folds into the S1 motif domain. Positions 301–341 (LMEQLEVENQDGDGEEHEDDDDDDDDEEEEEKPKEKKSSRK) are disordered. Acidic residues predominate over residues 303–330 (EQLEVENQDGDGEEHEDDDDDDDDEEEE). Over residues 331–341 (EKPKEKKSSRK) the composition is skewed to basic and acidic residues.

The protein belongs to the eIF-2-alpha family. Eukaryotic translation initiation factor 2 eIF2 is a heterotrimeric complex composed of an alpha, a beta and a gamma subunit.

It is found in the cytoplasm. Its subcellular location is the cytosol. Its function is as follows. eIF-2 functions in the early steps of protein synthesis by forming a ternary complex with GTP and initiator tRNA. This complex binds to a 40S ribosomal subunit, followed by mRNA binding to form a 43S pre-initiation complex. Junction of the 60S ribosomal subunit to form the 80S initiation complex is preceded by hydrolysis of the GTP bound to eIF-2 and release of an eIF-2-GDP binary complex. In order for eIF-2 to recycle and catalyze another round of initiation, the GDP bound to eIF-2 must exchange with GTP by way of a reaction catalyzed by eIF2B. The protein is Eukaryotic translation initiation factor 2 subunit 1 (eif2s1) of Dictyostelium discoideum (Social amoeba).